A 245-amino-acid chain; its full sequence is MYIVIDQGNTILKIGLFEGKAVIKTFQTKEVKQEWFYSILKTYQPQAGILCSTREVSESLLSLLRESLSYFYEFKNNLPLPLSIDYQTPRTLGTDRLAAAVGAWYQKLNNNLLIIDIGTAITIDFVNRKGIYKGGNISLGPAMRLNALHYFTNSLPLISENGNIPIRGYDTETAIRSGVMEGIVHELGSYIEEYEKKENALTFLTGGNTIYFEKRLKGTLFVDKHLVLKGLNEILIYQKKFFKSK.

6–13 (DQGNTILK) is an ATP binding site. Substrate contacts are provided by residues Y86 and 93–96 (GTDR). D95 acts as the Proton acceptor in catalysis. D116 contributes to the K(+) binding site. T119 contacts ATP. Residue T171 coordinates substrate.

The protein belongs to the type III pantothenate kinase family. Homodimer. The cofactor is NH4(+). It depends on K(+) as a cofactor.

The protein localises to the cytoplasm. The catalysed reaction is (R)-pantothenate + ATP = (R)-4'-phosphopantothenate + ADP + H(+). It participates in cofactor biosynthesis; coenzyme A biosynthesis; CoA from (R)-pantothenate: step 1/5. Functionally, catalyzes the phosphorylation of pantothenate (Pan), the first step in CoA biosynthesis. In Azobacteroides pseudotrichonymphae genomovar. CFP2, this protein is Type III pantothenate kinase.